The sequence spans 362 residues: Atypical chemokine receptor 3 (362 aa).

Residues 1 to 47 (MDVHLFDYAEPGNYSDINWPCNSSDCIVVDTVQCPTMPNKNVLLYTL) are Extracellular-facing. Residues Asn13 and Asn22 are each glycosylated (N-linked (GlcNAc...) asparagine). A helical transmembrane segment spans residues 48 to 68 (SFIYIFIFVIGMIANSVVVWV). The Cytoplasmic segment spans residues 69–81 (NIQAKTTGYDTHC). A helical transmembrane segment spans residues 82–102 (YILNLAIADLWVVITIPVWVV). Residues 103–118 (SLVQHNQWPMGELTCK) are Extracellular-facing. Cys117 and Cys196 form a disulfide bridge. The chain crosses the membrane as a helical span at residues 119 to 139 (ITHLIFSINLFGSIFFLACMS). The Cytoplasmic portion of the chain corresponds to 140-162 (VDRYLSITYFTGTSSYKKKMVRR). Residues 163–183 (VVCILVWLLAFFVSLPDTYYL) form a helical membrane-spanning segment. Topologically, residues 184 to 213 (KTVTSASNNETYCRSFYPEHSIKEWLIGME) are extracellular. A helical membrane pass occupies residues 214–234 (LVSVILGFAVPFTIIAIFYFL). Over 235 to 252 (LARAMSASGDQEKHSSRK) the chain is Cytoplasmic. A helical membrane pass occupies residues 253–273 (IIFSYVVVFLVCWLPYHFVVL). Topologically, residues 274-296 (LDIFSILHYIPFTCQLENVLFTA) are extracellular. A helical membrane pass occupies residues 297–319 (LHVTQCLSLVHCCVNPVLYSFIN). Residues 320–362 (RNYRYELMKAFIFKYSAKTGLTKLIDASRVSETEYSALEQNTK) are Cytoplasmic-facing. The C-terminal cytoplasmic tail stretch occupies residues 324 to 362 (YELMKAFIFKYSAKTGLTKLIDASRVSETEYSALEQNTK). Residues Ser347, Ser350, and Ser355 each carry the phosphoserine modification.

It belongs to the G-protein coupled receptor 1 family. Atypical chemokine receptor subfamily. In terms of assembly, homodimer. Can form heterodimers with CXCR4; heterodimerization may regulate CXCR4 signaling activity. Interacts with ARRB1 and ARRB2. In terms of processing, the Ser/Thr residues in the C-terminal cytoplasmic tail may be phosphorylated. Ubiquitinated at the Lys residues in its C-terminal cytoplasmic tail and is essential for correct trafficking from and to the cell membrane. Deubiquitinated by CXCL12-stimulation in a reversible manner. In terms of tissue distribution, not detected in blood, liver, lung and heart, but high expression detected in several tumor cell lines (at protein level). Expressed in heart, spleen, kidney, lung, ovary, brain, testis, astrocytes, neutrophils and B-lymphocytes.

It is found in the cell membrane. It localises to the early endosome. The protein localises to the recycling endosome. Its function is as follows. Atypical chemokine receptor that controls chemokine levels and localization via high-affinity chemokine binding that is uncoupled from classic ligand-driven signal transduction cascades, resulting instead in chemokine sequestration, degradation, or transcytosis. Also known as interceptor (internalizing receptor) or chemokine-scavenging receptor or chemokine decoy receptor. Acts as a receptor for chemokines CXCL11 and CXCL12/SDF1. Chemokine binding does not activate G-protein-mediated signal transduction but instead induces beta-arrestin recruitment, leading to ligand internalization and activation of MAPK signaling pathway. Required for regulation of CXCR4 protein levels in migrating interneurons, thereby adapting their chemokine responsiveness. In glioma cells, transduces signals via MEK/ERK pathway, mediating resistance to apoptosis. Promotes cell growth and survival. Not involved in cell migration, adhesion or proliferation of normal hematopoietic progenitors but activated by CXCL11 in malignant hemapoietic cells, leading to phosphorylation of ERK1/2 (MAPK3/MAPK1) and enhanced cell adhesion and migration. Plays a regulatory role in CXCR4-mediated activation of cell surface integrins by CXCL12. Required for heart valve development. Regulates axon guidance in the oculomotor system through the regulation of CXCL12 levels. In Mus musculus (Mouse), this protein is Atypical chemokine receptor 3.